The chain runs to 597 residues: Inactive metallocarboxypeptidase ECM14 (597 aa).

Positions 1–21 are cleaved as a signal peptide; the sequence is MRLFTHGQVLALLAFVNTISA. Positions 22 to 174 are excised as a propeptide; it reads TPSFSTNSYP…QTIYESYPSP (153 aa). The segment covering 170–179 has biased composition (low complexity); the sequence is SYPSPSQSPS. A disordered region spans residues 170 to 189; that stretch reads SYPSPSQSPSGRERGFLPSG. The 321-residue stretch at 202 to 522 folds into the Peptidase M14 domain; the sequence is NYQPLSVIVP…NAVMMLGRFL (321 aa). 2 residues coordinate Zn(2+): H264 and E267. Substrate is bound by residues 264-267, R322, and 339-340; these read HARE and DR. C333 and C356 are disulfide-bonded. The N-linked (GlcNAc...) asparagine glycan is linked to N349. H396 is a Zn(2+) binding site. Residue 397–398 coordinates substrate; that stretch reads SY. Residues 543 to 597 form a disordered region; the sequence is KDDKPILNDDDDDDADTNDDGIGRKDDSWIPDEYKGDNDRDESDGGWAFRRLRKR. Over residues 550-561 the composition is skewed to acidic residues; sequence NDDDDDDADTND. Over residues 563–580 the composition is skewed to basic and acidic residues; it reads GIGRKDDSWIPDEYKGDN.

It belongs to the peptidase M14 family. Zn(2+) is required as a cofactor.

It is found in the vacuole. The protein localises to the secreted. Its function is as follows. Inactive carboxypeptidase that may play a role in cell wall organization and biogenesis. This chain is Inactive metallocarboxypeptidase ECM14 (ECM14), found in Ajellomyces capsulatus (strain G186AR / H82 / ATCC MYA-2454 / RMSCC 2432) (Darling's disease fungus).